Here is a 134-residue protein sequence, read N- to C-terminus: MSYTRTVHSSTSILKMNSALQISCLLVVLGCLLGSGHCQSEAEFAAKSREIAQMFGNPSVDKYTKARNLPALLAFYEKYSSRLRLTPQERNSVNNAMRQYKAQRNQQVDGVSAQGGWLFDIIKSAISIIVKAVE.

The first 38 residues, 1 to 38, serve as a signal peptide directing secretion; sequence MSYTRTVHSSTSILKMNSALQISCLLVVLGCLLGSGHC.

It belongs to the Turandot family.

It localises to the secreted. Its function is as follows. A humoral factor that may play a role in stress tolerance. In Drosophila simulans (Fruit fly), this protein is Protein Turandot E.